We begin with the raw amino-acid sequence, 131 residues long: Small ribosomal subunit protein uS8 (131 aa).

The protein belongs to the universal ribosomal protein uS8 family. Part of the 30S ribosomal subunit. Contacts proteins S5 and S12.

One of the primary rRNA binding proteins, it binds directly to 16S rRNA central domain where it helps coordinate assembly of the platform of the 30S subunit. The sequence is that of Small ribosomal subunit protein uS8 from Albidiferax ferrireducens (strain ATCC BAA-621 / DSM 15236 / T118) (Rhodoferax ferrireducens).